Here is a 353-residue protein sequence, read N- to C-terminus: ATPase GET3 (353 aa).

26–33 serves as a coordination point for ATP; it reads KGGVGKTT. Aspartate 57 is an active-site residue. Positions 244 and 271 each coordinate ATP. Zn(2+) is bound by residues cysteine 284 and cysteine 287.

Belongs to the arsA ATPase family. As to quaternary structure, homodimer. Component of the Golgi to ER traffic (GET) complex, which is composed of GET1, GET2 and GET3. Within the complex, GET1 and GET2 form a heterotetramer which is stabilized by phosphatidylinositol binding and which binds to the GET3 homodimer. Interacts with the chloride channel protein GEF1.

The protein localises to the cytoplasm. Its subcellular location is the endoplasmic reticulum. The protein resides in the golgi apparatus. ATPase required for the post-translational delivery of tail-anchored (TA) proteins to the endoplasmic reticulum. Recognizes and selectively binds the transmembrane domain of TA proteins in the cytosol. This complex then targets to the endoplasmic reticulum by membrane-bound receptors GET1 and GET2, where the tail-anchored protein is released for insertion. This process is regulated by ATP binding and hydrolysis. ATP binding drives the homodimer towards the closed dimer state, facilitating recognition of newly synthesized TA membrane proteins. ATP hydrolysis is required for insertion. Subsequently, the homodimer reverts towards the open dimer state, lowering its affinity for the GET1-GET2 receptor, and returning it to the cytosol to initiate a new round of targeting. Cooperates with the HDEL receptor ERD2 to mediate the ATP-dependent retrieval of resident ER proteins that contain a C-terminal H-D-E-L retention signal from the Golgi to the ER. Involved in low-level resistance to the oxyanions arsenite and arsenate, and in heat tolerance. This is ATPase GET3 from Zygosaccharomyces rouxii (strain ATCC 2623 / CBS 732 / NBRC 1130 / NCYC 568 / NRRL Y-229).